The following is a 307-amino-acid chain: Elongation factor Ts (307 aa).

An involved in Mg(2+) ion dislocation from EF-Tu region spans residues 80 to 83 (TDFV).

This sequence belongs to the EF-Ts family.

The protein localises to the cytoplasm. Associates with the EF-Tu.GDP complex and induces the exchange of GDP to GTP. It remains bound to the aminoacyl-tRNA.EF-Tu.GTP complex up to the GTP hydrolysis stage on the ribosome. The sequence is that of Elongation factor Ts from Variovorax paradoxus (strain S110).